The primary structure comprises 782 residues: Lysosome membrane protein 2-C (782 aa).

Residues 1–7 (MVANNKG) are Cytoplasmic-facing. The helical transmembrane segment at 8-28 (LLIAGLLLSVIGAALFVISLA) threads the bilayer. Topologically, residues 29 to 739 (LLPSVLNVAT…QQFKQIQTVK (711 aa)) are lumenal. Residues asparagine 77, asparagine 105, asparagine 191, asparagine 219, asparagine 234, asparagine 243, asparagine 281, asparagine 368, asparagine 387, asparagine 401, asparagine 427, asparagine 432, asparagine 451, asparagine 465, asparagine 501, asparagine 536, asparagine 540, asparagine 595, asparagine 605, asparagine 613, asparagine 646, and asparagine 692 are each glycosylated (N-linked (GlcNAc...) asparagine). A helical membrane pass occupies residues 740–760 (IAPVVVVSIFGGILLIAGLVM). Residues 761 to 782 (AINGFRKTFYNNNQYNGYNIIN) lie on the Cytoplasmic side of the membrane. The Tyrosine-type lysosomal sorting signal motif lies at 777 to 781 (GYNII).

It belongs to the CD36 family. Heavily glycosylated.

Its subcellular location is the lysosome membrane. Functionally, may act as a lysosomal receptor. May be involved role in macropinocytosis and fluid phase exocytosis. The chain is Lysosome membrane protein 2-C (lmpC) from Dictyostelium discoideum (Social amoeba).